The primary structure comprises 254 residues: Alcohol dehydrogenase (254 aa).

Phe-10–Leu-33 contributes to the NAD(+) binding site. Residue Ser-138 coordinates substrate. Residue Tyr-151 is the Proton acceptor of the active site.

Belongs to the short-chain dehydrogenases/reductases (SDR) family. Homodimer.

It catalyses the reaction a primary alcohol + NAD(+) = an aldehyde + NADH + H(+). The catalysed reaction is a secondary alcohol + NAD(+) = a ketone + NADH + H(+). The chain is Alcohol dehydrogenase (Adh) from Scaptomyza albovittata (Fruit fly).